A 383-amino-acid polypeptide reads, in one-letter code: Acetylornithine deacetylase (383 aa).

A Zn(2+)-binding site is contributed by His80. The active site involves Asp82. Zn(2+) is bound at residue Asp112. Residue Glu144 is part of the active site. Zn(2+) is bound by residues Glu145, Glu169, and His355.

Belongs to the peptidase M20A family. ArgE subfamily. As to quaternary structure, homodimer. Zn(2+) serves as cofactor. Co(2+) is required as a cofactor. Requires glutathione as cofactor.

It localises to the cytoplasm. The enzyme catalyses N(2)-acetyl-L-ornithine + H2O = L-ornithine + acetate. The protein operates within amino-acid biosynthesis; L-arginine biosynthesis; L-ornithine from N(2)-acetyl-L-ornithine (linear): step 1/1. In terms of biological role, catalyzes the hydrolysis of the amide bond of N(2)-acetylated L-amino acids. Cleaves the acetyl group from N-acetyl-L-ornithine to form L-ornithine, an intermediate in L-arginine biosynthesis pathway, and a branchpoint in the synthesis of polyamines. This chain is Acetylornithine deacetylase, found in Salmonella agona (strain SL483).